We begin with the raw amino-acid sequence, 224 residues long: PKHD-type hydroxylase Shewana3_0717 (224 aa).

Residues 78–176 form the Fe2OG dioxygenase domain; it reads QFYPPLFNRY…RTAAFMWLQS (99 aa). The Fe cation site is built by H96, D98, and H157. A 2-oxoglutarate-binding site is contributed by R167.

The cofactor is Fe(2+). L-ascorbate is required as a cofactor.

The chain is PKHD-type hydroxylase Shewana3_0717 from Shewanella sp. (strain ANA-3).